The sequence spans 263 residues: MTKVEYKHTEIAVKKQLGQNFLTDRNITRKIVRLSGAKPEENILEIGPGFGALTKEIIEVCPSFTVVEKDPKLAAFIRTEYPQLNVIEADFLKIDLEAVTGARKLRILGNIPYSITSPILFRLLEYRRCFMHATLMMQHEVAMRIVAVPSTKEYGILAVQLQAFFDVSYGFRVGRKVFKPQPGVDSAVITITPKEHVPLSDPEGFSRFVRCAFHQRRKTLLNNLKESYNLDAVPSEVLKRRAEALAIQELFELFKEMKPKMLS.

Positions 20, 22, 47, 68, 90, and 110 each coordinate S-adenosyl-L-methionine.

Belongs to the class I-like SAM-binding methyltransferase superfamily. rRNA adenine N(6)-methyltransferase family. RsmA subfamily.

Its subcellular location is the cytoplasm. It catalyses the reaction adenosine(1518)/adenosine(1519) in 16S rRNA + 4 S-adenosyl-L-methionine = N(6)-dimethyladenosine(1518)/N(6)-dimethyladenosine(1519) in 16S rRNA + 4 S-adenosyl-L-homocysteine + 4 H(+). Its function is as follows. Specifically dimethylates two adjacent adenosines (A1518 and A1519) in the loop of a conserved hairpin near the 3'-end of 16S rRNA in the 30S particle. May play a critical role in biogenesis of 30S subunits. This chain is Ribosomal RNA small subunit methyltransferase A, found in Chlorobium limicola (strain DSM 245 / NBRC 103803 / 6330).